Here is a 147-residue protein sequence, read N- to C-terminus: DNA polymerase epsilon subunit 3 (147 aa).

N-acetylalanine is present on Ala2. Thr83 is subject to Phosphothreonine. A coiled-coil region spans residues 85 to 146; it reads LKEALEAYRR…EEQNEEEEVD (62 aa). A compositionally biased stretch (basic and acidic residues) spans 93-124; that stretch reads RREQKGKKEASEQKKKDKDKKTDSEEQDKSRD. The tract at residues 93-147 is disordered; the sequence is RREQKGKKEASEQKKKDKDKKTDSEEQDKSRDEDNDEDEERLEEEEQNEEEEVDN. Ser122 is subject to Phosphoserine. The segment covering 125 to 147 has biased composition (acidic residues); the sequence is EDNDEDEERLEEEEQNEEEEVDN.

As to quaternary structure, component of the DNA polymerase epsilon complex consisting of four subunits: the catalytic subunit POLE and the accessory subunits POLE2, POLE3 and POLE4. Interaction with POLE4 is a prerequisite for further binding with POLE and POLE2. Heterodimer with CHRAC1; binds to DNA. Component of the CHRAC ISWI chromatin remodeling complex at least composed of SMARCA5/SNF2H, BAZ1A/ACF1, CHRAC1 and POLE3; the complex preferentially binds DNA through the CHRAC1-POLE3 heterodimer and possesses ATP-dependent nucleosome-remodeling activity. Within the complex, the heterodimer with CHRAC1 interacts with SMARCA5/SNF2H; the interaction is direct and enhances nucleosome sliding activity by the SMARCA5/SNF2H and BAZ1A/ACF1 interaction. Within the complex, the heterodimer with CHRAC1 interacts with BAZ1A/ACF1; the interactions are direct.

The protein localises to the nucleus. Its function is as follows. Accessory component of the DNA polymerase epsilon complex. Participates in DNA repair and in chromosomal DNA replication. Forms a complex with CHRAC1 and binds naked DNA, which is then incorporated into chromatin, aided by the nucleosome-remodeling activity of ISWI/SNF2H and ACF1. Does not enhance nucleosome sliding activity of the ACF-5 ISWI chromatin remodeling complex. This chain is DNA polymerase epsilon subunit 3 (POLE3), found in Bos taurus (Bovine).